Reading from the N-terminus, the 277-residue chain is 2-dehydro-3-deoxyphosphooctonate aldolase (277 aa).

The protein belongs to the KdsA family.

The protein localises to the cytoplasm. It carries out the reaction D-arabinose 5-phosphate + phosphoenolpyruvate + H2O = 3-deoxy-alpha-D-manno-2-octulosonate-8-phosphate + phosphate. It functions in the pathway carbohydrate biosynthesis; 3-deoxy-D-manno-octulosonate biosynthesis; 3-deoxy-D-manno-octulosonate from D-ribulose 5-phosphate: step 2/3. It participates in bacterial outer membrane biogenesis; lipopolysaccharide biosynthesis. In Mesorhizobium japonicum (strain LMG 29417 / CECT 9101 / MAFF 303099) (Mesorhizobium loti (strain MAFF 303099)), this protein is 2-dehydro-3-deoxyphosphooctonate aldolase (kdsA).